The primary structure comprises 361 residues: Peptide chain release factor 1 (361 aa).

Gln235 bears the N5-methylglutamine mark.

The protein belongs to the prokaryotic/mitochondrial release factor family. Methylated by PrmC. Methylation increases the termination efficiency of RF1.

The protein resides in the cytoplasm. In terms of biological role, peptide chain release factor 1 directs the termination of translation in response to the peptide chain termination codons UAG and UAA. In Xanthomonas campestris pv. campestris (strain B100), this protein is Peptide chain release factor 1.